The chain runs to 549 residues: Chaperonin GroEL (549 aa).

ATP contacts are provided by residues threonine 29–proline 32, lysine 50, aspartate 86–threonine 90, glycine 413, asparagine 479–alanine 481, and aspartate 496. Residues valine 522–phenylalanine 549 form a disordered region. Residues glycine 532–phenylalanine 549 show a composition bias toward gly residues.

This sequence belongs to the chaperonin (HSP60) family. As to quaternary structure, forms a cylinder of 14 subunits composed of two heptameric rings stacked back-to-back. Interacts with the co-chaperonin GroES.

It localises to the cytoplasm. It carries out the reaction ATP + H2O + a folded polypeptide = ADP + phosphate + an unfolded polypeptide.. Its function is as follows. Together with its co-chaperonin GroES, plays an essential role in assisting protein folding. The GroEL-GroES system forms a nano-cage that allows encapsulation of the non-native substrate proteins and provides a physical environment optimized to promote and accelerate protein folding. In Deinococcus deserti (strain DSM 17065 / CIP 109153 / LMG 22923 / VCD115), this protein is Chaperonin GroEL.